Here is a 214-residue protein sequence, read N- to C-terminus: Putative AgrB-like protein (214 aa).

A run of 5 helical transmembrane segments spans residues 41–61 (IISV…LIFL), 82–102 (CTLL…SSFF), 109–129 (IIVF…FKFA), 154–174 (ILTI…NLGW), and 182–202 (LSII…GNIL).

Belongs to the AgrB family.

The protein resides in the cell membrane. Functionally, may be involved in the proteolytic processing of a quorum sensing system signal molecule precursor. The sequence is that of Putative AgrB-like protein from Clostridium perfringens (strain SM101 / Type A).